The sequence spans 533 residues: Beta-glucosidase 10 (533 aa).

The first 23 residues, 1–23 (MAVAGAMVMSGGVLLLLLAFTCA), serve as a signal peptide directing secretion. Gln53 contributes to the a beta-D-glucoside binding site. Asn122 is a glycosylation site (N-linked (GlcNAc...) asparagine). Residues His157 and 202 to 203 (NE) each bind a beta-D-glucoside. Residue Glu203 is the Proton donor of the active site. An intrachain disulfide couples Cys222 to Cys230. Tyr369 is an a beta-D-glucoside binding site. N-linked (GlcNAc...) asparagine glycosylation is present at Asn384. An a beta-D-glucoside-binding site is contributed by Glu440. The active-site Nucleophile is the Glu440. Asn448 carries an N-linked (GlcNAc...) asparagine glycan. Residues Trp489, 496 to 497 (EW), and Phe505 each bind a beta-D-glucoside.

Belongs to the glycosyl hydrolase 1 family.

The catalysed reaction is Hydrolysis of terminal, non-reducing beta-D-glucosyl residues with release of beta-D-glucose.. The polypeptide is Beta-glucosidase 10 (BGLU10) (Oryza sativa subsp. japonica (Rice)).